An 84-amino-acid chain; its full sequence is MAKSTKRRPAPEKPAKARKCVFCAKKNQQIDYKDTTLLRTYISERGKIRARRVTGNCVQHQRDIAIAVKNAREVALLPFTSSAR.

It belongs to the bacterial ribosomal protein bS18 family. In terms of assembly, part of the 30S ribosomal subunit. Forms a tight heterodimer with protein bS6.

Functionally, binds as a heterodimer with protein bS6 to the central domain of the 16S rRNA, where it helps stabilize the platform of the 30S subunit. The chain is Small ribosomal subunit protein bS18 from Mycobacterium leprae (strain Br4923).